We begin with the raw amino-acid sequence, 145 residues long: Putative antiporter subunit mnhG2 (145 aa).

The next 3 membrane-spanning stretches (helical) occupy residues 11 to 31 (IAAV…IGIV), 51 to 71 (VLLT…FFSV), and 72 to 92 (RLLL…HLVA).

The protein belongs to the CPA3 antiporters (TC 2.A.63) subunit G family. May form a heterooligomeric complex that consists of seven subunits: mnhA2, mnhB2, mnhC2, mnhD2, mnhE2, mnhF2 and mnhG2.

Its subcellular location is the cell membrane. The chain is Putative antiporter subunit mnhG2 (mnhG2) from Staphylococcus aureus (strain JH9).